Consider the following 78-residue polypeptide: uncharacterized protein (78 aa).

Positions 1 to 28 (MGGGNAQKSAMARAKNLEKAKAAGKGSQ) are disordered.

This is an uncharacterized protein from Arabidopsis thaliana (Mouse-ear cress).